The sequence spans 215 residues: Outer-membrane lipoprotein LolB (215 aa).

Residues 1–19 (MSKLRKITSLIFLTIIMVG) form the signal peptide. Cys-20 carries N-palmitoyl cysteine lipidation. A lipid anchor (S-diacylglycerol cysteine) is attached at Cys-20.

The protein belongs to the LolB family. As to quaternary structure, monomer.

It is found in the cell outer membrane. Plays a critical role in the incorporation of lipoproteins in the outer membrane after they are released by the LolA protein. The protein is Outer-membrane lipoprotein LolB of Vibrio atlanticus (strain LGP32) (Vibrio splendidus (strain Mel32)).